A 414-amino-acid chain; its full sequence is Isocitrate dehydrogenase [NADP] cytoplasmic (414 aa).

An N-acetylserine modification is found at Ser-2. Tyr-42 bears the Phosphotyrosine mark. Residue 75–77 participates in NADP(+) binding; sequence TIT. Thr-77 provides a ligand contact to substrate. N6-acetyllysine is present on Lys-81. Arg-82 provides a ligand contact to NADP(+). Substrate-binding positions include 94 to 100 and Arg-109; that span reads SPNGTIR. Lys-126 is subject to N6-succinyllysine. Arg-132 and Lys-212 together coordinate substrate. N6-acetyllysine is present on residues Lys-224 and Lys-233. Asp-252 serves as a coordination point for Mn(2+). An NADP(+)-binding site is contributed by Lys-260. Residues Asp-275 and Asp-279 each contribute to the Mn(2+) site. 310–315 is a binding site for NADP(+); sequence GTVTRH. Lys-321 carries the post-translational modification N6-acetyllysine. Asn-328 lines the NADP(+) pocket. Ser-389 carries the phosphoserine modification. N6-succinyllysine is present on Lys-400.

Belongs to the isocitrate and isopropylmalate dehydrogenases family. As to quaternary structure, homodimer. The cofactor is Mg(2+). Mn(2+) serves as cofactor. Post-translationally, acetylation at Lys-374 dramatically reduces catalytic activity.

The protein localises to the cytoplasm. It is found in the cytosol. The enzyme catalyses D-threo-isocitrate + NADP(+) = 2-oxoglutarate + CO2 + NADPH. Catalyzes the NADP(+)-dependent oxidative decarboxylation of isocitrate (D-threo-isocitrate) to 2-ketoglutarate (2-oxoglutarate), which is required by other enzymes such as the phytanoyl-CoA dioxygenase. Plays a critical role in the generation of NADPH, an important cofactor in many biosynthesis pathways. May act as a corneal epithelial crystallin and may be involved in maintaining corneal epithelial transparency. The protein is Isocitrate dehydrogenase [NADP] cytoplasmic (IDH1) of Ovis aries (Sheep).